The following is a 335-amino-acid chain: Phosphoserine phosphatase RsbU (335 aa).

The PPM-type phosphatase domain maps to 123–333; the sequence is DIGAISVPAK…DDFTLIVLRR (211 aa).

The catalysed reaction is O-phospho-L-serine + H2O = L-serine + phosphate. It catalyses the reaction O-phospho-D-serine + H2O = D-serine + phosphate. With respect to regulation, stimulated by a long-lived interaction with RsbT. In terms of biological role, positive regulator of sigma-B activity. Dephosphorylates RsbV in response to environmental stress conveyed from the RsbXST module. The chain is Phosphoserine phosphatase RsbU (rsbU) from Bacillus subtilis (strain 168).